The primary structure comprises 150 residues: uncharacterized protein (150 aa).

Residues 5-66 (LDRTDKMLLE…KPNYKKLNLG (62 aa)) form the HTH asnC-type domain. The H-T-H motif DNA-binding region spans 24 to 43 (IAALSKKLGIPRTTVHYRIK).

This is an uncharacterized protein from Pyrococcus furiosus (strain ATCC 43587 / DSM 3638 / JCM 8422 / Vc1).